Consider the following 383-residue polypeptide: Proton extrusion protein PxcA (383 aa).

A run of 4 helical transmembrane segments spans residues 163-183 (ILLL…AYII), 258-278 (AVKN…VCFA), 306-326 (IILF…TVLL), and 341-361 (FVML…KYWI).

Belongs to the CemA family.

It is found in the cell inner membrane. Functionally, required for H(+) efflux immediately after light irradiation to form a rapid H(+) concentration gradient across the thylakoid membranes. Together with PxcL, contributes to transient H(+) uptake following dark to light transition. The chain is Proton extrusion protein PxcA from Synechococcus sp. (strain CC9902).